A 341-amino-acid chain; its full sequence is uncharacterized protein (341 aa).

The next 10 helical transmembrane spans lie at 10–30 (ALGVVLLLFVVFLWLISSFLT), 42–62 (PFLITYINTGTFVFYLIPWYF), 107–127 (LGFCIIWFAANYFSNSSLGFT), 129–149 (VASFTIISSMSGFFTLGLGTI), 155–175 (FTLSKLLALMASVGGVIIVVT), 192–212 (ALGNAYALLAALLYGCYSVMV), 226–246 (LFFGLVGLFDLILLWPFLIIL), 263–283 (LIVLIINASITFVSDYLWVIA), 290–310 (LLVTVGMSLSIPLALFFDILL), and 313–333 (HYLNFSLILGSLLVFAGFIVV).

Belongs to the TPT transporter family.

The protein resides in the vacuole membrane. Its subcellular location is the golgi apparatus membrane. This is an uncharacterized protein from Schizosaccharomyces pombe (strain 972 / ATCC 24843) (Fission yeast).